The following is a 1192-amino-acid chain: Probable phospholipid-transporting ATPase IM (1192 aa).

Residues 1-44 (MFCSEKKLREVERIVKANDREYNEKFQYADNRIHTSKYNILTFL) lie on the Cytoplasmic side of the membrane. A helical transmembrane segment spans residues 45-66 (PINLFEQFQRVANAYFLCLLIL). The Exoplasmic loop segment spans residues 67–72 (QLIPEI). The helical transmembrane segment at 73-92 (SSLTWFTTIVPLVLVITMTA) threads the bilayer. At 93 to 276 (VKDATDDYFR…TSIDRLMNTL (184 aa)) the chain is on the cytoplasmic side. A helical membrane pass occupies residues 277–298 (VLWIFGFLICLGIILAIGNSIW). Over 299 to 327 (ESQTGDQFRTFLFWNEGEKSSVFSGFLTF) the chain is Exoplasmic loop. The helical transmembrane segment at 328–349 (WSYIIILNTVVPISLYVSVEVI) threads the bilayer. Residues 350 to 871 (RLGHSYFINW…GRWSYFRMCK (522 aa)) are Cytoplasmic-facing. The active-site 4-aspartylphosphate intermediate is the D392. ATP contacts are provided by D392, K393, T394, E496, F537, K560, R594, T674, G675, D676, R789, and K795. D392 contacts Mg(2+). T394 is a Mg(2+) binding site. A Mg(2+)-binding site is contributed by D815. ATP contacts are provided by N818 and D819. A Mg(2+)-binding site is contributed by D819. Residues 872-892 (FLCYFFYKNFAFTLVHFWFGF) traverse the membrane as a helical segment. Residues 893 to 904 (FCGFSAQTVYDQ) lie on the Exoplasmic loop side of the membrane. A helical transmembrane segment spans residues 905-924 (WFITLFNIVYTSLPVLAMGI). At 925–954 (FDQDVSDQNSVDCPQLYKPGQLNLLFNKRK) the chain is on the cytoplasmic side. A helical transmembrane segment spans residues 955–976 (FFICVLHGIYTSLVLFFIPYGA). The Exoplasmic loop segment spans residues 977 to 990 (FYNVAGEDGQHIAD). The helical transmembrane segment at 991–1013 (YQSFAVTMATSLVIVVSVQIALD) threads the bilayer. Topologically, residues 1014–1019 (TSYWTF) are cytoplasmic. A helical transmembrane segment spans residues 1020–1040 (INHVFIWGSIAIYFSILFTMH). Over 1041–1060 (SNGIFGIFPNQFPFVGNARH) the chain is Exoplasmic loop. Residues 1061–1085 (SLTQKCIWLVILLTTVASVMPVVAF) traverse the membrane as a helical segment. The Cytoplasmic segment spans residues 1086-1192 (RFLKVDLYPT…SFSQDKTVKL (107 aa)). Residues 1104-1125 (QKAQKKARPPSSRRPRTRRSSS) are compositionally biased toward basic residues. 2 disordered regions span residues 1104 to 1130 (QKAQ…RSGY) and 1143 to 1163 (TSGK…EKTH).

This sequence belongs to the cation transport ATPase (P-type) (TC 3.A.3) family. Type IV subfamily. As to quaternary structure, component of a P4-ATPase flippase complex which consists of a catalytic alpha subunit and an accessory beta subunit. Interacts with beta subunits TMEM30A and TMEM30B. Mg(2+) serves as cofactor. As to expression, ubiquitously expressed at moderate levels.

It is found in the cell membrane. The protein resides in the golgi apparatus. It carries out the reaction ATP + H2O + phospholipidSide 1 = ADP + phosphate + phospholipidSide 2.. Component of a P4-ATPase flippase complex which catalyzes the hydrolysis of ATP coupled to the transport of aminophospholipids from the outer to the inner leaflet of various membranes and ensures the maintenance of asymmetric distribution of phospholipids. Phospholipid translocation also seems to be implicated in vesicle formation and in uptake of lipid signaling molecules. In Homo sapiens (Human), this protein is Probable phospholipid-transporting ATPase IM (ATP8B4).